A 907-amino-acid chain; its full sequence is Clathrin coat assembly protein AP180 (907 aa).

Residues 14–145 (QYSVTGSAVA…FSYRQMAFDF (132 aa)) enclose the ENTH domain. Disordered regions lie at residues 285–326 (LEGK…DTSP), 342–380 (TSKP…TAWG), 393–414 (SVPS…PTTT), and 505–525 (VPVV…APSP). Ser-296, Ser-300, and Ser-306 each carry phosphoserine. The span at 302–324 (LSKSSPATTVTSPNSTPAKTIDT) shows a compositional bias: polar residues. Residue Thr-310 is glycosylated (O-linked (GlcNAc) threonine). Ser-313 carries the post-translational modification Phosphoserine. A Phosphothreonine modification is found at Thr-317. Residues 505–515 (VPVVTPTASTA) show a composition bias toward low complexity. Residues 516-525 (PPVPATAPSP) show a composition bias toward pro residues. Phosphoserine is present on residues Ser-596, Ser-602, Ser-623, Ser-629, and Ser-763. Arg-865 carries the asymmetric dimethylarginine; alternate modification. Arg-865 is modified (omega-N-methylarginine; alternate). The disordered stretch occupies residues 867 to 907 (PFGAAAVPGTQLSPSPTPASQSPKKPPAKDPLADLNIKDFL). The span at 893 to 907 (PAKDPLADLNIKDFL) shows a compositional bias: basic and acidic residues.

This sequence belongs to the PICALM/SNAP91 family. As to quaternary structure, binds AP2A2. Interacts with AP2B1; clathrin competes with SNAP91. Post-translationally, thr-310 can be modified by the addition of N-acetylglucosamine which can be further phosphorylated. There is no evidence for direct Thr-310 phosphorylation.

Its subcellular location is the cell membrane. The protein resides in the membrane. It is found in the coated pit. Adaptins are components of the adapter complexes which link clathrin to receptors in coated vesicles. Clathrin-associated protein complexes are believed to interact with the cytoplasmic tails of membrane proteins, leading to their selection and concentration. Binding of AP180 to clathrin triskelia induces their assembly into 60-70 nm coats. The chain is Clathrin coat assembly protein AP180 (SNAP91) from Homo sapiens (Human).